The primary structure comprises 265 residues: Undecaprenyl-diphosphatase (265 aa).

Helical transmembrane passes span 1–21 (MDIF…FLPI), 39–59 (QGVG…VLYF), 84–104 (ALAW…LALL), 114–134 (ASVI…ADWL), 144–164 (LNWK…VPGT), 187–207 (FSFL…LLEV), 218–238 (GFLI…HFFL), and 244–264 (VGMW…YAVL).

The protein belongs to the UppP family.

It localises to the cell inner membrane. The enzyme catalyses di-trans,octa-cis-undecaprenyl diphosphate + H2O = di-trans,octa-cis-undecaprenyl phosphate + phosphate + H(+). Catalyzes the dephosphorylation of undecaprenyl diphosphate (UPP). Confers resistance to bacitracin. The polypeptide is Undecaprenyl-diphosphatase (Marinobacter nauticus (strain ATCC 700491 / DSM 11845 / VT8) (Marinobacter aquaeolei)).